A 145-amino-acid chain; its full sequence is MNKDEVFLRQWFEILYSLTNPEANSDLRRINNEKGVEKVGQKRSAESRREGKKKRVKTQCVIKSSDKSDHDTLLKKKRRERIRRQLETLKEITPNCPQSDINAILDCVIEYTNNLRLAHYKGSQGICDDWRLFTEAGAVLYYIDT.

Residues 33 to 49 (EKGVEKVGQKRSAESRR) are compositionally biased toward basic and acidic residues. Residues 33-61 (EKGVEKVGQKRSAESRREGKKKRVKTQCV) are disordered. The bHLH domain occupies 66-115 (DKSDHDTLLKKKRRERIRRQLETLKEITPNCPQSDINAILDCVIEYTNNL).

In terms of assembly, homodimer.

It is found in the nucleus. Its function is as follows. Required during early embryo development, for the endosperm formation. The protein is Transcription factor MEE8 (MEE8) of Arabidopsis thaliana (Mouse-ear cress).